We begin with the raw amino-acid sequence, 68 residues long: DNA-directed RNA polymerase subunit omega (68 aa).

Belongs to the RNA polymerase subunit omega family. In terms of assembly, the RNAP catalytic core consists of 2 alpha, 1 beta, 1 beta' and 1 omega subunit. When a sigma factor is associated with the core the holoenzyme is formed, which can initiate transcription.

It catalyses the reaction RNA(n) + a ribonucleoside 5'-triphosphate = RNA(n+1) + diphosphate. Its function is as follows. Promotes RNA polymerase assembly. Latches the N- and C-terminal regions of the beta' subunit thereby facilitating its interaction with the beta and alpha subunits. The chain is DNA-directed RNA polymerase subunit omega from Syntrophotalea carbinolica (strain DSM 2380 / NBRC 103641 / GraBd1) (Pelobacter carbinolicus).